Here is a 380-residue protein sequence, read N- to C-terminus: Alanine racemase (380 aa).

The active-site Proton acceptor; specific for D-alanine is Lys-41. Lys-41 is modified (N6-(pyridoxal phosphate)lysine). Arg-141 is a binding site for substrate. Tyr-271 acts as the Proton acceptor; specific for L-alanine in catalysis. Met-318 contacts substrate.

It belongs to the alanine racemase family. It depends on pyridoxal 5'-phosphate as a cofactor.

It catalyses the reaction L-alanine = D-alanine. It participates in amino-acid biosynthesis; D-alanine biosynthesis; D-alanine from L-alanine: step 1/1. Catalyzes the interconversion of L-alanine and D-alanine. May also act on other amino acids. This Latilactobacillus sakei subsp. sakei (strain 23K) (Lactobacillus sakei subsp. sakei) protein is Alanine racemase (alr).